A 158-amino-acid chain; its full sequence is Endoribonuclease YbeY (158 aa).

Histidine 121, histidine 125, and histidine 131 together coordinate Zn(2+).

This sequence belongs to the endoribonuclease YbeY family. The cofactor is Zn(2+).

Its subcellular location is the cytoplasm. Its function is as follows. Single strand-specific metallo-endoribonuclease involved in late-stage 70S ribosome quality control and in maturation of the 3' terminus of the 16S rRNA. This is Endoribonuclease YbeY from Exiguobacterium sibiricum (strain DSM 17290 / CCUG 55495 / CIP 109462 / JCM 13490 / 255-15).